We begin with the raw amino-acid sequence, 481 residues long: Xylulose kinase (481 aa).

Position 81-82 (81-82) interacts with substrate; sequence QH. Aspartate 239 acts as the Proton acceptor in catalysis.

Belongs to the FGGY kinase family.

The catalysed reaction is D-xylulose + ATP = D-xylulose 5-phosphate + ADP + H(+). In terms of biological role, catalyzes the phosphorylation of D-xylulose to D-xylulose 5-phosphate. The chain is Xylulose kinase from Streptomyces rubiginosus.